The primary structure comprises 242 residues: Glucosamine-6-phosphate deaminase (242 aa).

The active-site Proton acceptor; for enolization step is the Asp67. Asn136 serves as the catalytic For ring-opening step. Catalysis depends on His138, which acts as the Proton acceptor; for ring-opening step. Residue Glu143 is the For ring-opening step of the active site.

Belongs to the glucosamine/galactosamine-6-phosphate isomerase family. NagB subfamily.

The enzyme catalyses alpha-D-glucosamine 6-phosphate + H2O = beta-D-fructose 6-phosphate + NH4(+). It functions in the pathway amino-sugar metabolism; N-acetylneuraminate degradation; D-fructose 6-phosphate from N-acetylneuraminate: step 5/5. Its function is as follows. Catalyzes the reversible isomerization-deamination of glucosamine 6-phosphate (GlcN6P) to form fructose 6-phosphate (Fru6P) and ammonium ion. The sequence is that of Glucosamine-6-phosphate deaminase from Clostridium perfringens (strain ATCC 13124 / DSM 756 / JCM 1290 / NCIMB 6125 / NCTC 8237 / Type A).